A 264-amino-acid chain; its full sequence is Iodotyrosine deiodinase (264 aa).

Residues 75–79 (RRTVR) and 103–104 (SG) contribute to the FMN site. Residues A105, E132, Y136, and K157 each contribute to the 3-iodo-L-tyrosine site. Residues 212–214 (TST) and R254 each bind FMN.

This sequence belongs to the nitroreductase family. The cofactor is FMN.

It carries out the reaction 2 iodide + L-tyrosine + 2 NADP(+) = 3,5-diiodo-L-tyrosine + 2 NADPH + H(+). The catalysed reaction is iodide + L-tyrosine + NADP(+) = 3-iodo-L-tyrosine + NADPH. It catalyses the reaction 3-iodo-L-tyrosine + iodide + NADP(+) = 3,5-diiodo-L-tyrosine + NADPH + H(+). The enzyme catalyses L-tyrosine + chloride + NADP(+) = 3-chloro-L-tyrosine + NADPH. It carries out the reaction bromide + L-tyrosine + NADP(+) = 3-bromo-L-tyrosine + NADPH. In terms of biological role, catalyzes the dehalogenation of halotyrosines such as 3,5-diiodo-L-tyrosine. Likely to also catalyze the dehalogenation of other halotyrosines such as 3-bromo-L-tyrosine, 3-chloro-L-tyrosine and 3-iodo-L-tyrosine. In Nematostella vectensis (Starlet sea anemone), this protein is Iodotyrosine deiodinase.